Here is a 334-residue protein sequence, read N- to C-terminus: Tryptophan--tRNA ligase (334 aa).

ATP-binding positions include 11 to 13 and 19 to 20; these read QPS and GN. A 'HIGH' region motif is present at residues 12–20; sequence PSGELTIGN. Asp135 contributes to the L-tryptophan binding site. ATP contacts are provided by residues 147–149, Ile186, and 195–199; these read GDD and KMSKS. Residues 195 to 199 carry the 'KMSKS' region motif; sequence KMSKS.

This sequence belongs to the class-I aminoacyl-tRNA synthetase family. In terms of assembly, homodimer.

Its subcellular location is the cytoplasm. It catalyses the reaction tRNA(Trp) + L-tryptophan + ATP = L-tryptophyl-tRNA(Trp) + AMP + diphosphate + H(+). Functionally, catalyzes the attachment of tryptophan to tRNA(Trp). This Haemophilus influenzae (strain ATCC 51907 / DSM 11121 / KW20 / Rd) protein is Tryptophan--tRNA ligase.